The sequence spans 496 residues: MFS transporter cpaT (496 aa).

Positions 1–45 are disordered; sequence MGHQEEPPRICKTPSGHEQGEGPAEKTSKPSTEEVGWDGPTDPAR. The segment covering 18–32 has biased composition (basic and acidic residues); sequence EQGEGPAEKTSKPST. Asn48 carries an N-linked (GlcNAc...) asparagine glycan. A helical transmembrane segment spans residues 58-78; it reads MGIISYLTFLTPLTSSIVAPA. Asn90 carries N-linked (GlcNAc...) asparagine glycosylation. The next 5 helical transmembrane spans lie at 93 to 113, 130 to 150, 154 to 174, 180 to 200, and 212 to 232; these read LASFVVSIYLVGFAVGPLFLA, FIFTIWNIAGAVAPNVGALLV, FAGISGSGPVTLGAGSVADMF, GVAMSLYGLGPLLGPVIGPIA, and WVFWLLAIVSGVAVILVLFVL. Residue Asn252 is glycosylated (N-linked (GlcNAc...) asparagine). A run of 6 helical transmembrane segments spans residues 288 to 308, 325 to 345, 367 to 387, 395 to 415, 427 to 449, and 463 to 483; these read VALFSLYTGVVFGYLYLLFTT, GLVYIGIGVGALIGISCFGAL, LPPLIPGSFLIPIGLFWYGWS, IMPIIGLGWVGCGMIATLLPI, AASAIAANTVVRSIVGAFLPLAG, and SLLGFVALGLLPVPVVFYFYG.

The protein belongs to the major facilitator superfamily.

The protein resides in the membrane. Functionally, MFS transporter; part of the gene cluster that mediates the biosynthesis of the fungal neurotoxin cyclopiazonic acid (CPA), a nanomolar inhibitor of Ca(2+)-ATPase with a unique pentacyclic indole tetramic acid scaffold. This Aspergillus oryzae (Yellow koji mold) protein is MFS transporter cpaT.